A 198-amino-acid chain; its full sequence is Holliday junction branch migration complex subunit RuvA (198 aa).

The tract at residues 1–64 (MYEYIKGEYM…EDFIGLYGFE (64 aa)) is domain I. Residues 65-143 (SLEELDMFKL…SDELLNCIDE (79 aa)) are domain II. The flexible linker stretch occupies residues 144–154 (FDDVTQDNSLA). The segment at 154 to 198 (ALSEALSALISLGYTEKEAEKVLKDVDKSESVENIIKSALVKLMG) is domain III.

This sequence belongs to the RuvA family. In terms of assembly, homotetramer. Forms an RuvA(8)-RuvB(12)-Holliday junction (HJ) complex. HJ DNA is sandwiched between 2 RuvA tetramers; dsDNA enters through RuvA and exits via RuvB. An RuvB hexamer assembles on each DNA strand where it exits the tetramer. Each RuvB hexamer is contacted by two RuvA subunits (via domain III) on 2 adjacent RuvB subunits; this complex drives branch migration. In the full resolvosome a probable DNA-RuvA(4)-RuvB(12)-RuvC(2) complex forms which resolves the HJ.

The protein localises to the cytoplasm. The RuvA-RuvB-RuvC complex processes Holliday junction (HJ) DNA during genetic recombination and DNA repair, while the RuvA-RuvB complex plays an important role in the rescue of blocked DNA replication forks via replication fork reversal (RFR). RuvA specifically binds to HJ cruciform DNA, conferring on it an open structure. The RuvB hexamer acts as an ATP-dependent pump, pulling dsDNA into and through the RuvAB complex. HJ branch migration allows RuvC to scan DNA until it finds its consensus sequence, where it cleaves and resolves the cruciform DNA. This chain is Holliday junction branch migration complex subunit RuvA, found in Clostridium botulinum (strain Alaska E43 / Type E3).